Here is a 146-residue protein sequence, read N- to C-terminus: P antigen family member 1 (146 aa).

The disordered stretch occupies residues 16–146; that stretch reads YVESSEESSD…PEEDEGQSQP (131 aa). Positions 19 to 32 are enriched in acidic residues; sequence SSEESSDEQPDEVE. Residue Ser63 is modified to Phosphoserine. Residues 79–92 are compositionally biased toward basic and acidic residues; sequence PDTKRVCLRNEEQM. Position 105 is a phosphoserine (Ser105). A compositionally biased stretch (basic and acidic residues) spans 107–120; the sequence is EQVHPKTGCERGDG. Ser144 carries the phosphoserine modification.

The protein belongs to the GAGE family. In terms of tissue distribution, isolated from prostate cancer cell lines; expression associated with progression to androgen insensitive phenotype. Expressed in normal testis and at lower level in normal placenta.

The polypeptide is P antigen family member 1 (PAGE1) (Homo sapiens (Human)).